The sequence spans 308 residues: Coenzyme PQQ synthesis protein B (308 aa).

Belongs to the PqqB family.

It functions in the pathway cofactor biosynthesis; pyrroloquinoline quinone biosynthesis. In terms of biological role, may be involved in the transport of PQQ or its precursor to the periplasm. The protein is Coenzyme PQQ synthesis protein B of Rhodopseudomonas palustris (strain BisB5).